A 285-amino-acid polypeptide reads, in one-letter code: 2-dehydro-3-deoxyphosphooctonate aldolase (285 aa).

The protein belongs to the KdsA family.

The protein localises to the cytoplasm. The enzyme catalyses D-arabinose 5-phosphate + phosphoenolpyruvate + H2O = 3-deoxy-alpha-D-manno-2-octulosonate-8-phosphate + phosphate. It participates in carbohydrate biosynthesis; 3-deoxy-D-manno-octulosonate biosynthesis; 3-deoxy-D-manno-octulosonate from D-ribulose 5-phosphate: step 2/3. The protein operates within bacterial outer membrane biogenesis; lipopolysaccharide biosynthesis. The chain is 2-dehydro-3-deoxyphosphooctonate aldolase from Acidovorax ebreus (strain TPSY) (Diaphorobacter sp. (strain TPSY)).